The sequence spans 360 residues: Glucan endo-1,3-beta-glucosidase B (360 aa).

The N-terminal stretch at 1–25 (MATSQIAIIVLLGLLVATNIHITEA) is a signal peptide. Position 26 is a pyrrolidone carboxylic acid (glutamine 26). The Proton donor role is filled by glutamate 120. The Nucleophile role is filled by glutamate 265. Positions 341 to 360 (VSERVWDITNSTASSLTSEI) are cleaved as a propeptide — removed in mature form. An N-linked (GlcNAc...) asparagine glycan is attached at asparagine 350.

The protein belongs to the glycosyl hydrolase 17 family.

It localises to the vacuole. The catalysed reaction is Hydrolysis of (1-&gt;3)-beta-D-glucosidic linkages in (1-&gt;3)-beta-D-glucans.. Its function is as follows. Implicated in the defense of plants against pathogens. The polypeptide is Glucan endo-1,3-beta-glucosidase B (Solanum lycopersicum (Tomato)).